Consider the following 543-residue polypeptide: Chaperonin GroEL (543 aa).

ATP contacts are provided by residues 30–33 (TLGP), lysine 51, 87–91 (DGTTT), glycine 415, 480–482 (NAL), and aspartate 496.

It belongs to the chaperonin (HSP60) family. In terms of assembly, forms a cylinder of 14 subunits composed of two heptameric rings stacked back-to-back. Interacts with the co-chaperonin GroES.

It localises to the cytoplasm. The catalysed reaction is ATP + H2O + a folded polypeptide = ADP + phosphate + an unfolded polypeptide.. Together with its co-chaperonin GroES, plays an essential role in assisting protein folding. The GroEL-GroES system forms a nano-cage that allows encapsulation of the non-native substrate proteins and provides a physical environment optimized to promote and accelerate protein folding. The chain is Chaperonin GroEL from Gemmatimonas aurantiaca (strain DSM 14586 / JCM 11422 / NBRC 100505 / T-27).